Consider the following 366-residue polypeptide: Chorismate synthase (366 aa).

Arg-48 and Arg-54 together coordinate NADP(+). FMN is bound by residues 125 to 127 (RSS), 238 to 239 (NA), Gly-278, 293 to 297 (KPTSS), and Arg-319.

This sequence belongs to the chorismate synthase family. In terms of assembly, homotetramer. The cofactor is FMNH2.

The enzyme catalyses 5-O-(1-carboxyvinyl)-3-phosphoshikimate = chorismate + phosphate. The protein operates within metabolic intermediate biosynthesis; chorismate biosynthesis; chorismate from D-erythrose 4-phosphate and phosphoenolpyruvate: step 7/7. In terms of biological role, catalyzes the anti-1,4-elimination of the C-3 phosphate and the C-6 proR hydrogen from 5-enolpyruvylshikimate-3-phosphate (EPSP) to yield chorismate, which is the branch point compound that serves as the starting substrate for the three terminal pathways of aromatic amino acid biosynthesis. This reaction introduces a second double bond into the aromatic ring system. This Paraburkholderia phytofirmans (strain DSM 17436 / LMG 22146 / PsJN) (Burkholderia phytofirmans) protein is Chorismate synthase.